The sequence spans 354 residues: uncharacterized protein (354 aa).

It belongs to the asfivirus B354L family.

This is an uncharacterized protein from Ornithodoros (relapsing fever ticks).